A 367-amino-acid chain; its full sequence is Methylthioribose-1-phosphate isomerase (367 aa).

Asp250 serves as the catalytic Proton donor.

It belongs to the eIF-2B alpha/beta/delta subunits family. MtnA subfamily.

It localises to the cytoplasm. It is found in the nucleus. It catalyses the reaction 5-(methylsulfanyl)-alpha-D-ribose 1-phosphate = 5-(methylsulfanyl)-D-ribulose 1-phosphate. It functions in the pathway amino-acid biosynthesis; L-methionine biosynthesis via salvage pathway; L-methionine from S-methyl-5-thio-alpha-D-ribose 1-phosphate: step 1/6. Catalyzes the interconversion of methylthioribose-1-phosphate (MTR-1-P) into methylthioribulose-1-phosphate (MTRu-1-P). This is Methylthioribose-1-phosphate isomerase (IDI2) from Zea mays (Maize).